Here is a 179-residue protein sequence, read N- to C-terminus: Inner membrane-spanning protein YciB (179 aa).

5 consecutive transmembrane segments (helical) span residues Ile-22–Val-42, Met-50–Asn-70, Trp-76–Met-96, Leu-121–Leu-141, and Phe-149–Ile-169.

It belongs to the YciB family.

The protein resides in the cell inner membrane. Functionally, plays a role in cell envelope biogenesis, maintenance of cell envelope integrity and membrane homeostasis. The polypeptide is Inner membrane-spanning protein YciB (Salmonella arizonae (strain ATCC BAA-731 / CDC346-86 / RSK2980)).